The sequence spans 365 residues: tRNA(Met) cytidine acetate ligase (365 aa).

ATP is bound by residues 7–20 (IAEFNPFHNGHKYL), glycine 96, asparagine 152, and arginine 175.

This sequence belongs to the TmcAL family.

It is found in the cytoplasm. The enzyme catalyses cytidine(34) in elongator tRNA(Met) + acetate + ATP = N(4)-acetylcytidine(34) in elongator tRNA(Met) + AMP + diphosphate. Catalyzes the formation of N(4)-acetylcytidine (ac(4)C) at the wobble position of elongator tRNA(Met), using acetate and ATP as substrates. First activates an acetate ion to form acetyladenylate (Ac-AMP) and then transfers the acetyl group to tRNA to form ac(4)C34. This is tRNA(Met) cytidine acetate ligase from Streptococcus pneumoniae (strain ATCC BAA-255 / R6).